Reading from the N-terminus, the 94-residue chain is Large ribosomal subunit protein bL25 (94 aa).

The protein belongs to the bacterial ribosomal protein bL25 family. Part of the 50S ribosomal subunit; part of the 5S rRNA/L5/L18/L25 subcomplex. Contacts the 5S rRNA. Binds to the 5S rRNA independently of L5 and L18.

Its function is as follows. This is one of the proteins that binds to the 5S RNA in the ribosome where it forms part of the central protuberance. The polypeptide is Large ribosomal subunit protein bL25 (Shigella boydii serotype 4 (strain Sb227)).